We begin with the raw amino-acid sequence, 671 residues long: Putative glycoside hydrolase BT_3595 (671 aa).

A signal peptide spans 1-24; sequence MITGIISILCYLQCFGTLSASVTA.

Belongs to the glycoside hydrolase-like 3 (GHL3) family.

The sequence is that of Putative glycoside hydrolase BT_3595 from Bacteroides thetaiotaomicron (strain ATCC 29148 / DSM 2079 / JCM 5827 / CCUG 10774 / NCTC 10582 / VPI-5482 / E50).